Consider the following 498-residue polypeptide: Cytotardin (498 aa).

The interval 18–58 (DRVHSKDELQALNTRLAKYIDKIRNLENENVALQRQLQTAE) is coil 1A. Positions 22-378 (SKDELQALNT…KLLSGEEQRL (357 aa)) constitute an IF rod domain. Positions 59–69 (QTTVTEIHRVS) are linker 1. A coil 1B region spans residues 70-213 (KNYDEELAKL…ENLREEKSQR (144 aa)). Positions 214 to 231 (QYLLHDLQRGLQDEFESK) are linker 2. A coil 2 region spans residues 232 to 371 (LVQQLNELRA…AELATYNKLL (140 aa)). The interval 381–425 (DGSGTVIRRPTGGATGTGSGIYGGTGSGGYSRDIGSTTTTKTTYT) is disordered. Gly residues predominate over residues 393–409 (GATGTGSGIYGGTGSGG).

Belongs to the intermediate filament family.

It localises to the cytoplasm. The protein localises to the cell cortex. Functionally, intermediate filament (IF) protein that forms both short filaments and extensive cytoskeletal networks which most likely are homomeric. Some of the cytotardin arrays display cage-like perinuclear structures, while others are located in the periphery close to the cell membrane. The entire tardigrade body is ensheathed by a grid of belt-like filaments formed by the cytotardin protein, which retain their integrity even in contracted specimens. The belt-like structures encircling each epidermal cell might help to resist the shearing forces that arise during freezing and thawing cycles, whereas the dense meshwork at the basis of each claw and around the stylets might provide the tissue stability necessary for locomotion and feeding. This chain is Cytotardin, found in Hypsibius exemplaris (Freshwater tardigrade).